The chain runs to 198 residues: FMN-dependent NADH:quinone oxidoreductase (198 aa).

S10 is a binding site for FMN.

This sequence belongs to the azoreductase type 1 family. As to quaternary structure, homodimer. It depends on FMN as a cofactor.

It catalyses the reaction 2 a quinone + NADH + H(+) = 2 a 1,4-benzosemiquinone + NAD(+). It carries out the reaction N,N-dimethyl-1,4-phenylenediamine + anthranilate + 2 NAD(+) = 2-(4-dimethylaminophenyl)diazenylbenzoate + 2 NADH + 2 H(+). In terms of biological role, quinone reductase that provides resistance to thiol-specific stress caused by electrophilic quinones. Its function is as follows. Also exhibits azoreductase activity. Catalyzes the reductive cleavage of the azo bond in aromatic azo compounds to the corresponding amines. In Paraburkholderia phymatum (strain DSM 17167 / CIP 108236 / LMG 21445 / STM815) (Burkholderia phymatum), this protein is FMN-dependent NADH:quinone oxidoreductase.